The primary structure comprises 141 residues: Protein C19orf12 (141 aa).

The chain crosses the membrane as a helical span at residues 40–60 (FVGGLVGGPPGLAVGGAVGGL).

Belongs to the C19orf12 family.

Its subcellular location is the mitochondrion. The protein localises to the mitochondrion membrane. It is found in the endoplasmic reticulum. It localises to the cytoplasm. The protein resides in the cytosol. In Homo sapiens (Human), this protein is Protein C19orf12 (C19orf12).